The chain runs to 568 residues: SLAIN motif-containing protein 1 (568 aa).

5 disordered regions span residues 1-22 (MMAE…SGPV), 59-92 (LLLL…TAAA), 139-162 (GGGP…SPPP), 235-256 (YTSR…STSE), and 291-403 (STSA…LRRS). A coiled-coil region spans residues 21 to 56 (PVVNAELEVKKLQELVRKLEKQNEQLRSRAASAAAA). Residues 62–74 (LPPPPPAAPPPAG) are compositionally biased toward pro residues. Low complexity predominate over residues 75-92 (LQPLGPRSPPAATATAAA). A compositionally biased stretch (gly residues) spans 139 to 149 (GGGPEPGGAGT). Positions 235-245 (YTSRGSPLSPQ) are enriched in polar residues. The residue at position 243 (S243) is a Phosphoserine. 2 stretches are compositionally biased toward low complexity: residues 246–255 (SSIDSELSTS) and 291–307 (STSA…SLSS). Residues 316 to 329 (QEYDQYSLEDEEEF) are compositionally biased toward acidic residues. Residues 366–384 (SSQYFPSNNYQQQQYYSPQ) are compositionally biased toward low complexity. Residues 385–395 (AQTPDQQPNRT) show a composition bias toward polar residues. R471 and R543 each carry asymmetric dimethylarginine.

The protein belongs to the SLAIN motif-containing family. Interacts with MAPRE1, MAPRE2, MAPRE3 and CKAP5. Interacts with ZDHHC17 (via ANK repeats). Expressed in embryonic stem cells. Expressed in brain.

It localises to the cytoplasm. The protein resides in the cytoskeleton. Functionally, microtubule plus-end tracking protein that might be involved in the regulation of cytoplasmic microtubule dynamics, microtubule organization and microtubule elongation. The protein is SLAIN motif-containing protein 1 (SLAIN1) of Homo sapiens (Human).